Here is a 193-residue protein sequence, read N- to C-terminus: NAD(P)H-quinone oxidoreductase subunit I (193 aa).

4Fe-4S ferredoxin-type domains follow at residues 55–84 and 95–124; these read GRIH…VDWE and KHYS…VTEE. [4Fe-4S] cluster contacts are provided by Cys-64, Cys-67, Cys-70, Cys-74, Cys-104, Cys-107, Cys-110, and Cys-114.

Belongs to the complex I 23 kDa subunit family. In terms of assembly, NDH-1 is composed of at least 11 different subunits. [4Fe-4S] cluster is required as a cofactor.

Its subcellular location is the cellular thylakoid membrane. It carries out the reaction a plastoquinone + NADH + (n+1) H(+)(in) = a plastoquinol + NAD(+) + n H(+)(out). It catalyses the reaction a plastoquinone + NADPH + (n+1) H(+)(in) = a plastoquinol + NADP(+) + n H(+)(out). Functionally, NDH-1 shuttles electrons from an unknown electron donor, via FMN and iron-sulfur (Fe-S) centers, to quinones in the respiratory and/or the photosynthetic chain. The immediate electron acceptor for the enzyme in this species is believed to be plastoquinone. Couples the redox reaction to proton translocation, and thus conserves the redox energy in a proton gradient. The sequence is that of NAD(P)H-quinone oxidoreductase subunit I from Cyanothece sp. (strain PCC 7425 / ATCC 29141).